We begin with the raw amino-acid sequence, 150 residues long: Photosystem II extrinsic protein V (150 aa).

An N-terminal signal peptide occupies residues 1–20 (MIRVIMLLVLVWMTPMISWA). Heme c-binding residues include cysteine 50, cysteine 53, histidine 54, and histidine 105.

The protein belongs to the cytochrome c family. PsbV subfamily. As to quaternary structure, PSII is composed of 1 copy each of membrane proteins PsbA, PsbB, PsbC, PsbD, PsbE, PsbF, PsbH, PsbI, PsbJ, PsbK, PsbL, PsbM, PsbT, PsbY, PsbZ, Psb30/Ycf12, at least 3 peripheral proteins of the oxygen-evolving complex and a large number of cofactors. It forms dimeric complexes. The extrinsic subunits in red algae are PsbO (OEC33), PsbQ', cytochrome c-550 and PsbU. Heme c serves as cofactor.

Its subcellular location is the plastid. The protein resides in the chloroplast thylakoid membrane. Functionally, one of the extrinsic, lumenal subunits of photosystem II (PSII). PSII is a light-driven water plastoquinone oxidoreductase, using light energy to abstract electrons from H(2)O, generating a proton gradient subsequently used for ATP formation. The extrinsic proteins stabilize the structure of photosystem II oxygen-evolving complex (OEC), the ion environment of oxygen evolution and protect the OEC against heat-induced inactivation. The protein is Photosystem II extrinsic protein V of Cyanidioschyzon merolae (strain NIES-3377 / 10D) (Unicellular red alga).